Here is a 168-residue protein sequence, read N- to C-terminus: Microtubule-associated protein Jupiter (168 aa).

A compositionally biased stretch (polar residues) spans 1 to 14 (MISNFDCTDNQASS). The tract at residues 1–33 (MISNFDCTDNQASSKVLRPPGGGSSDIFGSEMP) is disordered. Phosphoserine is present on Ser-24. Thr-35 carries the phosphothreonine modification. The segment covering 76–87 (RGQKTVDSHSRL) has biased composition (basic and acidic residues). Disordered stretches follow at residues 76–106 (RGQK…KSSI) and 124–168 (NGHY…GAGK). Phosphothreonine is present on residues Thr-92 and Thr-96. A phosphoserine mark is found at Ser-105, Ser-133, and Ser-144. A compositionally biased stretch (low complexity) spans 131 to 144 (SGSVSSASSSVSSS). Positions 145–155 (TENLKMNSGSR) are enriched in polar residues.

This sequence belongs to the MAP Jupiter family.

Its subcellular location is the nucleus. The protein resides in the cytoplasm. It localises to the cytoskeleton. The protein localises to the spindle. Functionally, binds to all microtubule populations. In Drosophila simulans (Fruit fly), this protein is Microtubule-associated protein Jupiter.